The chain runs to 170 residues: Shikimate kinase (170 aa).

Position 11-16 (11-16 (LSGKST)) interacts with ATP. Residue serine 15 participates in Mg(2+) binding. The substrate site is built by aspartate 33, arginine 57, and glycine 79. Residue arginine 119 participates in ATP binding. Arginine 137 is a substrate binding site.

It belongs to the shikimate kinase family. In terms of assembly, monomer. Requires Mg(2+) as cofactor.

The protein localises to the cytoplasm. It catalyses the reaction shikimate + ATP = 3-phosphoshikimate + ADP + H(+). Its pathway is metabolic intermediate biosynthesis; chorismate biosynthesis; chorismate from D-erythrose 4-phosphate and phosphoenolpyruvate: step 5/7. Functionally, catalyzes the specific phosphorylation of the 3-hydroxyl group of shikimic acid using ATP as a cosubstrate. This is Shikimate kinase from Clostridium botulinum (strain Loch Maree / Type A3).